A 265-amino-acid chain; its full sequence is Tryptophan synthase alpha chain (265 aa).

Residues glutamate 48 and aspartate 59 each act as proton acceptor in the active site.

Belongs to the TrpA family. Tetramer of two alpha and two beta chains.

It carries out the reaction (1S,2R)-1-C-(indol-3-yl)glycerol 3-phosphate + L-serine = D-glyceraldehyde 3-phosphate + L-tryptophan + H2O. It functions in the pathway amino-acid biosynthesis; L-tryptophan biosynthesis; L-tryptophan from chorismate: step 5/5. In terms of biological role, the alpha subunit is responsible for the aldol cleavage of indoleglycerol phosphate to indole and glyceraldehyde 3-phosphate. This Pelagibacter ubique (strain HTCC1062) protein is Tryptophan synthase alpha chain.